We begin with the raw amino-acid sequence, 136 residues long: Large ribosomal subunit protein uL16 (136 aa).

This sequence belongs to the universal ribosomal protein uL16 family. As to quaternary structure, part of the 50S ribosomal subunit.

Functionally, binds 23S rRNA and is also seen to make contacts with the A and possibly P site tRNAs. The protein is Large ribosomal subunit protein uL16 of Bradyrhizobium diazoefficiens (strain JCM 10833 / BCRC 13528 / IAM 13628 / NBRC 14792 / USDA 110).